A 146-amino-acid chain; its full sequence is MKLHELKPAEGSRKVRNRVGRGTSSGNGKTSGRGQKGQKARSGVGLRPGFEGGQTPLFRRLPKRGFTNINAKEYTLVNLDQLNVFEDGTEVTPVVLKEAGIIRAEKSGVKVLGNGELTKKLTVKAAKFSKSAEAAITAKGGSIEVI.

The segment covering 1–13 (MKLHELKPAEGSR) has biased composition (basic and acidic residues). Residues 1–57 (MKLHELKPAEGSRKVRNRVGRGTSSGNGKTSGRGQKGQKARSGVGLRPGFEGGQTPL) are disordered. Residues 23–35 (TSSGNGKTSGRGQ) show a composition bias toward gly residues.

This sequence belongs to the universal ribosomal protein uL15 family. Part of the 50S ribosomal subunit.

In terms of biological role, binds to the 23S rRNA. The chain is Large ribosomal subunit protein uL15 from Streptococcus thermophilus (strain ATCC BAA-491 / LMD-9).